We begin with the raw amino-acid sequence, 307 residues long: Oxygen-dependent coproporphyrinogen-III oxidase (307 aa).

Ser-99 contributes to the substrate binding site. Positions 103 and 113 each coordinate a divalent metal cation. The Proton donor role is filled by His-113. 115–117 provides a ligand contact to substrate; sequence NVR. A divalent metal cation-binding residues include His-152 and His-182. The segment at 247–282 is important for dimerization; it reads YVEFNLVFDRGTLFGLQSGGRTESILLSMPPTAGWR. Position 265–267 (265–267) interacts with substrate; it reads GGR.

It belongs to the aerobic coproporphyrinogen-III oxidase family. As to quaternary structure, homodimer. A divalent metal cation is required as a cofactor.

Its subcellular location is the cytoplasm. It catalyses the reaction coproporphyrinogen III + O2 + 2 H(+) = protoporphyrinogen IX + 2 CO2 + 2 H2O. It participates in porphyrin-containing compound metabolism; protoporphyrin-IX biosynthesis; protoporphyrinogen-IX from coproporphyrinogen-III (O2 route): step 1/1. Functionally, involved in the heme biosynthesis. Catalyzes the aerobic oxidative decarboxylation of propionate groups of rings A and B of coproporphyrinogen-III to yield the vinyl groups in protoporphyrinogen-IX. In Burkholderia pseudomallei (strain 1106a), this protein is Oxygen-dependent coproporphyrinogen-III oxidase.